The following is a 512-amino-acid chain: Tyrosine-protein kinase Lyn (512 aa).

Positions 1–45 are disordered; it reads MGCIKSKRKDNLNDDEVDSKTQPVRNTDRTIYVRDPTSNKQQRPV. The N-myristoyl glycine moiety is linked to residue Gly2. The S-palmitoyl cysteine moiety is linked to residue Cys3. Ser19 is modified (phosphoserine). In terms of domain architecture, SH3 spans 63-123; that stretch reads EQGDIVVALY…PSNYVAKVNT (61 aa). The 98-residue stretch at 129–226 folds into the SH2 domain; sequence WFFKDITRKD…GLCRRLEKAC (98 aa). Tyr193 bears the Phosphotyrosine mark. At Ser228 the chain carries Phosphoserine. Residues 247–501 form the Protein kinase domain; the sequence is IKLVKKLGAG…YLQSVLDDFY (255 aa). ATP contacts are provided by residues 253-261 and Lys275; that span reads LGAGQFGEV. Residues Tyr306 and Tyr316 each carry the phosphotyrosine modification. Asp367 (proton acceptor) is an active-site residue. A Phosphotyrosine; by autocatalysis modification is found at Tyr397. Tyr460 and Tyr473 each carry phosphotyrosine. Tyr508 is modified (phosphotyrosine; by autocatalysis, CSK and MATK).

Belongs to the protein kinase superfamily. Tyr protein kinase family. SRC subfamily. As to quaternary structure, interacts with TEC. Interacts (via SH2 domain) with FLT3 (tyrosine phosphorylated). Interacts with LIME1 and with CD79A upon activation of the B-cell antigen receptor. Interacts with the B-cell receptor complex. Interacts with phosphorylated THEMIS2. Interacts with EPOR. Interacts with MS4A2/FCER1B. Interaction (via the SH2 and SH3 domains) with MUC1 is stimulated by IL7 and the subsequent phosphorylation increases the binding between MUC1 and CTNNB1/beta-catenin. Interacts with ADAM15. Interacts with NDFIP2 and more weakly with NDFIP1. Interacts with FASLG. Interacts with KIT. Interacts with HCLS1. Interacts with FCGR2B. Interacts with FCGR1A; the interaction may be indirect. Interacts with CD19, CD22, CD79A and CD79B. Interacts (via SH3 domain) with CBLC, PPP1R15A and PDE4A. Interacts with TGFB1I1. Interacts (via SH3 domain) with PIK3R1, the regulatory subunit of phosphatidylinositol 3-kinase; this interaction enhances phosphatidylinositol 3-kinase activity. Interacts with CSF2RB, the common subunit of the IL3, IL5 and CSF2 receptors. Interacts with PAG1; identified in a complex with PAG1 and STAT3. Interacts with ABL1. Interacts with PTPN6/SHP-1. Interacts (via SH3 domain) with SCIMP (via proline-rich region). This interaction facilitates the phosphorylation of SCIMP on 'Tyr-96', which enhances binding of SCIMP to TLR4, and consequently the phosphorylation of TLR4 in response to stimulation by lipopolysaccharide in macrophages. Interacts with LPXN (via LD motif 3) and the interaction is induced upon B-cell antigen receptor (BCR) activation. Interacts (via SH3-domain) with ANKRD54 (via ankyrin repeat region) in an activation-independent status of LYN. Forms a multiprotein complex with ANKRD54 and HCLS1. Interacts (via SH2 and SH3 domains) with UNC119; leading to LYN activation. Interacts with CD36. Interacts with LYN. Interacts with SKAP1 and FYB1; this interaction promotes the phosphorylation of CLNK. Interacts with BCAR1/CAS and NEDD9/HEF1. Ubiquitinated by CBL, leading to its degradation. In terms of processing, autophosphorylated. Phosphorylated on tyrosine residues in response to KIT signaling. Phosphorylation at Tyr-397 is required for optimal activity. Phosphorylation at Tyr-508 inhibits kinase activity. Phosphorylated at Tyr-508 by CSK. Dephosphorylated by PTPRC/CD45. Becomes rapidly phosphorylated upon activation of the B-cell receptor and the immunoglobulin receptor FCGR1A. Phosphorylated in response to ITGB1 in B-cells. In terms of tissue distribution, detected in bone marrow-derived monocytes and macrophages (at protein level). Expressed predominantly in B-lymphoid and myeloid cells.

It is found in the cell membrane. Its subcellular location is the nucleus. The protein localises to the cytoplasm. It localises to the perinuclear region. The protein resides in the golgi apparatus. It is found in the membrane. It catalyses the reaction L-tyrosyl-[protein] + ATP = O-phospho-L-tyrosyl-[protein] + ADP + H(+). With respect to regulation, subject to autoinhibition, mediated by intramolecular interactions between the SH2 domain and the C-terminal phosphotyrosine. Phosphorylation at Tyr-397 is required for optimal activity. Phosphorylated by CSK at Tyr-508; phosphorylation at Tyr-508 inhibits kinase activity. Kinase activity is modulated by dephosphorylation by PTPRC/CD45. Inhibited by dasatinib, PP2, and SU6656. In terms of biological role, non-receptor tyrosine-protein kinase that transmits signals from cell surface receptors and plays an important role in the regulation of innate and adaptive immune responses, hematopoiesis, responses to growth factors and cytokines, integrin signaling, but also responses to DNA damage and genotoxic agents. Functions primarily as negative regulator, but can also function as activator, depending on the context. Required for the initiation of the B-cell response, but also for its down-regulation and termination. Plays an important role in the regulation of B-cell differentiation, proliferation, survival and apoptosis, and is important for immune self-tolerance. Acts downstream of several immune receptors, including the B-cell receptor, CD79A, CD79B, CD5, CD19, CD22, FCER1, FCGR2, FCGR1A, TLR2 and TLR4. Plays a role in the inflammatory response to bacterial lipopolysaccharide. Mediates the responses to cytokines and growth factors in hematopoietic progenitors, platelets, erythrocytes, and in mature myeloid cells, such as dendritic cells, neutrophils and eosinophils. Acts downstream of EPOR, KIT, MPL, the chemokine receptor CXCR4, as well as the receptors for IL3, IL5 and CSF2. Plays an important role in integrin signaling. Regulates cell proliferation, survival, differentiation, migration, adhesion, degranulation, and cytokine release. Involved in the regulation of endothelial activation, neutrophil adhesion and transendothelial migration. Down-regulates signaling pathways by phosphorylation of immunoreceptor tyrosine-based inhibitory motifs (ITIM), that then serve as binding sites for phosphatases, such as PTPN6/SHP-1, PTPN11/SHP-2 and INPP5D/SHIP-1, that modulate signaling by dephosphorylation of kinases and their substrates. Phosphorylates LIME1 in response to CD22 activation. Phosphorylates BTK, CBL, CD5, CD19, CD72, CD79A, CD79B, CSF2RB, DOK1, HCLS1, MS4A2/FCER1B, SYK and TEC. Phosphorylates PIRB at Tyr-794 and Tyr-824, which is required for PIRB interaction with PTPN6/SHP-1 and PTPN11/SHP-2. Promotes phosphorylation of SIRPA, PTPN6/SHP-1, PTPN11/SHP-2 and INPP5D/SHIP-1. Required for rapid phosphorylation of FER in response to FCER1 activation. Mediates KIT phosphorylation. Acts as an effector of EPOR (erythropoietin receptor) in controlling KIT expression and may play a role in erythroid differentiation during the switch between proliferation and maturation. Depending on the context, activates or inhibits several signaling cascades. Regulates phosphatidylinositol 3-kinase activity and AKT1 activation. Regulates activation of the MAP kinase signaling cascade, including activation of MAP2K1/MEK1, MAPK1/ERK2, MAPK3/ERK1, MAPK8/JNK1 and MAPK9/JNK2. Mediates activation of STAT5A and/or STAT5B. Phosphorylates LPXN on 'Tyr-72'. Kinase activity facilitates TLR4-TLR6 heterodimerization and signal initiation. Phosphorylates SCIMP on 'Tyr-96'; this enhances binding of SCIMP to TLR4, promoting the phosphorylation of TLR4, and a selective cytokine response to lipopolysaccharide in macrophages. Phosphorylates CLNK. Phosphorylates BCAR1/CAS and NEDD9/HEF1. This chain is Tyrosine-protein kinase Lyn (Lyn), found in Mus musculus (Mouse).